The primary structure comprises 185 residues: Elongation factor P (185 aa).

The protein belongs to the elongation factor P family.

It localises to the cytoplasm. It functions in the pathway protein biosynthesis; polypeptide chain elongation. In terms of biological role, involved in peptide bond synthesis. Stimulates efficient translation and peptide-bond synthesis on native or reconstituted 70S ribosomes in vitro. Probably functions indirectly by altering the affinity of the ribosome for aminoacyl-tRNA, thus increasing their reactivity as acceptors for peptidyl transferase. This chain is Elongation factor P, found in Streptococcus equi subsp. equi (strain 4047).